A 476-amino-acid chain; its full sequence is RuvB-like helicase 2 (476 aa).

72-80 is an ATP binding site; that stretch reads VGPPSTGKT.

This sequence belongs to the RuvB family. May form heterododecamers with RVB1. Component of the SWR1 chromatin remodeling complex, the INO80 chromatin remodeling complex, and of the R2TP complex.

The protein resides in the nucleus. It carries out the reaction ATP + H2O = ADP + phosphate + H(+). Functionally, DNA helicase which participates in several chromatin remodeling complexes, including the SWR1 and the INO80 complexes. The SWR1 complex mediates the ATP-dependent exchange of histone H2A for the H2A variant HZT1 leading to transcriptional regulation of selected genes by chromatin remodeling. The INO80 complex remodels chromatin by shifting nucleosomes and is involved in DNA repair. Also involved in pre-rRNA processing. This is RuvB-like helicase 2 (RVB2) from Mycosarcoma maydis (Corn smut fungus).